A 517-amino-acid chain; its full sequence is Apolipoprotein N-acyltransferase (517 aa).

The next 7 helical transmembrane spans lie at 5–25 (SFFS…ATLT), 26–46 (FAPY…LWLL), 55–75 (GLIG…WVHV), 90–110 (FLMS…GALF), 128–148 (VIWL…PWLW), 162–182 (APIL…GALV), and 193–213 (LMVP…SWVV). One can recognise a CN hydrolase domain in the interval 225-471 (IQGNVPQELK…TAVLRATITP (247 aa)). The Proton acceptor role is filled by glutamate 264. Lysine 330 is a catalytic residue. The Nucleophile role is filled by cysteine 382.

It belongs to the CN hydrolase family. Apolipoprotein N-acyltransferase subfamily.

The protein resides in the cell inner membrane. The enzyme catalyses N-terminal S-1,2-diacyl-sn-glyceryl-L-cysteinyl-[lipoprotein] + a glycerophospholipid = N-acyl-S-1,2-diacyl-sn-glyceryl-L-cysteinyl-[lipoprotein] + a 2-acyl-sn-glycero-3-phospholipid + H(+). Its pathway is protein modification; lipoprotein biosynthesis (N-acyl transfer). In terms of biological role, catalyzes the phospholipid dependent N-acylation of the N-terminal cysteine of apolipoprotein, the last step in lipoprotein maturation. The protein is Apolipoprotein N-acyltransferase of Photobacterium profundum (strain SS9).